The primary structure comprises 340 residues: Nuclear transcription factor Y subunit A-3 (340 aa).

The interval 43–116 is disordered; the sequence is SLSLKVDSRP…KGFASNPKQG (74 aa). A compositionally biased stretch (low complexity) spans 60–77; sequence QISFQDQDSSSTQSTGQS. Positions 78 to 103 are enriched in polar residues; sequence YTEVASSGDDNPSRQISFSAKSGSEI. Residues 182–205 carry the Subunit association domain (SAD) motif; that stretch reads FVNAKQYHAIMRRRQQRAKLEAQN. A DNA-binding region (NFYA/HAP2-type) is located at residues 212–237; the sequence is KPYLHESRHVHALKRPRGSGGRFLNT.

The protein belongs to the NFYA/HAP2 subunit family. As to quaternary structure, heterotrimeric transcription factor composed of three components, NF-YA, NF-YB and NF-YC. NF-YB and NF-YC must interact and dimerize for NF-YA association and DNA binding. Ubiquitous.

The protein localises to the nucleus. Stimulates the transcription of various genes by recognizing and binding to a CCAAT motif in promoters. This chain is Nuclear transcription factor Y subunit A-3 (NFYA3), found in Arabidopsis thaliana (Mouse-ear cress).